A 152-amino-acid polypeptide reads, in one-letter code: Small ribosomal subunit protein bS16 (152 aa).

Positions 84–152 are disordered; the sequence is WKWEASNNPQ…EAAAEEEKSE (69 aa). The span at 97–123 shows a compositional bias: basic and acidic residues; it reads PGQKAKELAAEKAEKEADRKAAEEEAK. Residues 124-144 show a composition bias toward low complexity; sequence AAAAAPAAEEAPAEEAPAAEA.

The protein belongs to the bacterial ribosomal protein bS16 family.

In Maricaulis maris (strain MCS10) (Caulobacter maris), this protein is Small ribosomal subunit protein bS16.